A 1328-amino-acid polypeptide reads, in one-letter code: Mitogen-activated protein kinase kinase kinase 19 (1328 aa).

Positions M1–H19 are enriched in basic and acidic residues. Disordered regions lie at residues M1–L28, R44–Q74, V344–Y380, and Q524–K561. Positions V344 to E361 are enriched in basic and acidic residues. A compositionally biased stretch (polar residues) spans S364–A377. Over residues Q524–T542 the composition is skewed to basic and acidic residues. Positions W1061–L1324 constitute a Protein kinase domain. ATP contacts are provided by residues L1067–V1075 and K1089. D1186 serves as the catalytic Proton acceptor.

This sequence belongs to the protein kinase superfamily. STE Ser/Thr protein kinase family. STE20 subfamily.

The enzyme catalyses L-seryl-[protein] + ATP = O-phospho-L-seryl-[protein] + ADP + H(+). It catalyses the reaction L-threonyl-[protein] + ATP = O-phospho-L-threonyl-[protein] + ADP + H(+). This chain is Mitogen-activated protein kinase kinase kinase 19 (MAP3K19), found in Homo sapiens (Human).